The primary structure comprises 708 residues: Elongation factor G (708 aa).

One can recognise a tr-type G domain in the interval 8–290 (KRYRNIGISA…AVIQYLPAPM (283 aa)). Residues 17-24 (AHIDAGKT), 88-92 (DTPGH), and 142-145 (NKMD) each bind GTP.

The protein belongs to the TRAFAC class translation factor GTPase superfamily. Classic translation factor GTPase family. EF-G/EF-2 subfamily.

The protein localises to the cytoplasm. Functionally, catalyzes the GTP-dependent ribosomal translocation step during translation elongation. During this step, the ribosome changes from the pre-translocational (PRE) to the post-translocational (POST) state as the newly formed A-site-bound peptidyl-tRNA and P-site-bound deacylated tRNA move to the P and E sites, respectively. Catalyzes the coordinated movement of the two tRNA molecules, the mRNA and conformational changes in the ribosome. The sequence is that of Elongation factor G from Psychrobacter arcticus (strain DSM 17307 / VKM B-2377 / 273-4).